A 101-amino-acid chain; its full sequence is Acylphosphatase (101 aa).

Positions 12–98 (RAHVFVTGRV…EGLRGFEVKR (87 aa)) constitute an Acylphosphatase-like domain. Active-site residues include Arg27 and Asn45.

This sequence belongs to the acylphosphatase family.

The catalysed reaction is an acyl phosphate + H2O = a carboxylate + phosphate + H(+). This chain is Acylphosphatase (acyP), found in Nostoc sp. (strain PCC 7120 / SAG 25.82 / UTEX 2576).